Here is a 340-residue protein sequence, read N- to C-terminus: HPr kinase/phosphorylase (340 aa).

Active-site residues include histidine 153 and lysine 174. Residue 168–175 (GNSGLGKS) coordinates ATP. Residue serine 175 participates in Mg(2+) binding. Aspartate 192 serves as the catalytic Proton acceptor; for phosphorylation activity. Proton donor; for dephosphorylation activity. Residues 216-225 (MEIRGLGVVD) are important for the catalytic mechanism of both phosphorylation and dephosphorylation. Glutamate 217 contributes to the Mg(2+) binding site. Arginine 258 is an active-site residue. The interval 279 to 284 (PINPGK) is important for the catalytic mechanism of dephosphorylation.

The protein belongs to the HPrK/P family. In terms of assembly, homohexamer. Mg(2+) serves as cofactor.

The enzyme catalyses [HPr protein]-L-serine + ATP = [HPr protein]-O-phospho-L-serine + ADP + H(+). The catalysed reaction is [HPr protein]-O-phospho-L-serine + phosphate + H(+) = [HPr protein]-L-serine + diphosphate. In terms of biological role, catalyzes the ATP- as well as the pyrophosphate-dependent phosphorylation of a specific serine residue in HPr, a phosphocarrier protein of the phosphoenolpyruvate-dependent sugar phosphotransferase system (PTS). HprK/P also catalyzes the pyrophosphate-producing, inorganic phosphate-dependent dephosphorylation (phosphorolysis) of seryl-phosphorylated HPr (P-Ser-HPr). The protein is HPr kinase/phosphorylase of Prosthecochloris aestuarii (strain DSM 271 / SK 413).